The primary structure comprises 590 residues: Keratin, type II cytoskeletal 5 (590 aa).

Over residues 1-18 (MSRQSSVSFRSGGSRSFS) the composition is skewed to low complexity. The segment at 1–20 (MSRQSSVSFRSGGSRSFSTA) is disordered. The interval 1–167 (MSRQSSVSFR…DPSIQRVRTE (167 aa)) is head. Phosphoserine is present on residues Ser-5, Ser-8, Ser-16, and Ser-21. At Thr-24 the chain carries Phosphothreonine; by CDK1. Residues Ser-26, Ser-36, Ser-50, Ser-64, Ser-71, Ser-75, and Ser-82 each carry the phosphoserine modification. Phosphothreonine; by CDK1 is present on Thr-151. The coil 1A stretch occupies residues 168–203 (EREQIKTLNNKFASFIDKVRFLEQQNKVLDTKWTLL). Residues 168-481 (EREQIKTLNN…KLLEGEECRL (314 aa)) enclose the IF rod domain. The linker 1 stretch occupies residues 204–222 (QEQGTKTVRQNLEPLFEQY). A coil 1B region spans residues 223 to 315 (INNLRRQLDS…FFDAELSQMQ (93 aa)). The tract at residues 316–338 (THVSDTSVVLSMDNNRNLDLDSI) is linker 12. Positions 339–477 (IAEVKAQYEE…ATYRKLLEGE (139 aa)) are coil 2. Residues 478-590 (ECRLSGEGVG…TSSSRKSFKS (113 aa)) are tail. Residues 566 to 590 (GSGGGSSSSVKFVSTTSSSRKSFKS) form a disordered region. Residues 572–590 (SSSVKFVSTTSSSRKSFKS) show a composition bias toward low complexity.

The protein belongs to the intermediate filament family. As to quaternary structure, heterodimer of a type I and a type II keratin. Heterodimer with type I keratin KRT25 leading to the formation of keratin intermediate filament (KIF) network. Forms a heterodimer (via 2B domains) with KRT14 (via 2B domains). Interacts with PLEC isoform 1C, when in a heterodimer with KRT14. Interacts with TCHP. Interacts with EPPK1. Interacts with AMELX. Interacts with PKP1 (via N-terminus) and PKP2. In terms of processing, phosphorylated by CDK1, AURKB and Rho-kinase, phosphorylation is regulated by the cell cycle. Thr-24 phosphorylation, mediated by CDK1, peaks during prometaphase or metaphase cells with phosphorylated filamentous structures evident throughout the cytoplasm during early mitosis. CDK1 phosphorylates Thr-24 in mitotic cells at the site of injury. O-glycosylated. As to expression, expressed in corneal epithelium (at protein level). Expressed in keratinocytes (at protein level).

Its subcellular location is the cytoplasm. In terms of biological role, required for the formation of keratin intermediate filaments in the basal epidermis and maintenance of the skin barrier in response to mechanical stress. Regulates the recruitment of Langerhans cells to the epidermis, potentially by modulation of the abundance of macrophage chemotactic cytokines, macrophage inflammatory cytokines and CTNND1 localization in keratinocytes. The chain is Keratin, type II cytoskeletal 5 (KRT5) from Homo sapiens (Human).